A 190-amino-acid chain; its full sequence is MRLPLLVSVGVLLVALLPSPPCRALLSRGPIPGARQASQHPQPLSFFQPLPQPQEPQALPTLLRVGEEYFLRLGNLDETRAAPLSPAASPLASRSSSRLSPDKVAANFFRALLQPRRPLDSPAGPAKRGTENALGSRQEAPAARKRRSQEPPISLDLTFHLLREVLEMTKADQLAQQAHSNRKLLDIAGK.

An N-terminal signal peptide occupies residues 1-24; that stretch reads MRLPLLVSVGVLLVALLPSPPCRA. The propeptide occupies 25–147; it reads LLSRGPIPGA…QEAPAARKRR (123 aa). Disordered stretches follow at residues 33–53 and 115–151; these read GARQ…LPQP and PRRP…SQEP. Residues 41–53 show a composition bias toward low complexity; that stretch reads PQPLSFFQPLPQP. Ala-188 is subject to Alanine amide.

This sequence belongs to the sauvagine/corticotropin-releasing factor/urotensin I family. Interacts (via C-terminus) with CRFR1 (via N-terminal extracellular domain). As to expression, produced by the hypothalamus.

It is found in the secreted. Functionally, hormone regulating the release of corticotropin from pituitary gland. Induces NLRP6 in intestinal epithelial cells, hence may influence gut microbiota profile. The sequence is that of Corticoliberin (CRH) from Ovis aries (Sheep).